The following is a 494-amino-acid chain: Alpha-amylase-related protein (494 aa).

The first 20 residues, 1-20, serve as a signal peptide directing secretion; it reads MIKFALALTLCLAGASLSLA. Position 21 is a pyrrolidone carboxylic acid (Gln21). Cys48 and Cys104 are oxidised to a cystine. Residues Asn118, Gln169, and Asp178 each coordinate Ca(2+). Residues Cys157 and Cys171 are joined by a disulfide bond. Arg206 lines the chloride pocket. Residue Asp208 is the Nucleophile of the active site. Residue His212 coordinates Ca(2+). Glu245 acts as the Proton donor in catalysis. Asn308 and Arg343 together coordinate chloride. 3 disulfides stabilise this stretch: Cys376-Cys382, Cys418-Cys441, and Cys448-Cys460.

Belongs to the glycosyl hydrolase 13 family. As to quaternary structure, monomer. Ca(2+) is required as a cofactor. The cofactor is chloride.

The protein localises to the secreted. The catalysed reaction is Endohydrolysis of (1-&gt;4)-alpha-D-glucosidic linkages in polysaccharides containing three or more (1-&gt;4)-alpha-linked D-glucose units.. The sequence is that of Alpha-amylase-related protein (Amyrel) from Drosophila kikkawai (Fruit fly).